The sequence spans 94 residues: Co-chaperonin GroES (94 aa).

The protein belongs to the GroES chaperonin family. In terms of assembly, heptamer of 7 subunits arranged in a ring. Interacts with the chaperonin GroEL.

It localises to the cytoplasm. Functionally, together with the chaperonin GroEL, plays an essential role in assisting protein folding. The GroEL-GroES system forms a nano-cage that allows encapsulation of the non-native substrate proteins and provides a physical environment optimized to promote and accelerate protein folding. GroES binds to the apical surface of the GroEL ring, thereby capping the opening of the GroEL channel. This is Co-chaperonin GroES from Ehrlichia chaffeensis (strain ATCC CRL-10679 / Arkansas).